The chain runs to 51 residues: Epididymal sperm protein E (51 aa).

A zinc finger lies at 8–39; sequence CVRCRRKTPSFNSKTVTFRNKRRAIRSHCAYC.

Sperm.

It localises to the nucleus. This chain is Epididymal sperm protein E, found in Sepia officinalis (Common cuttlefish).